A 484-amino-acid chain; its full sequence is Ubiquinone biosynthesis monooxygenase COQ6, mitochondrial (484 aa).

Residues 1-41 (MLSLAKAKLAVVGIGRQCVAVRTLNGARAVHRSFSSSEHDQ) constitute a mitochondrion transit peptide.

It belongs to the UbiH/COQ6 family. As to quaternary structure, component of a multi-subunit COQ enzyme complex, composed of at least coq3, coq4, coq5, coq6, coq7 and coq9. Interacts with coq8b and coq7. Requires FAD as cofactor.

It is found in the mitochondrion inner membrane. It localises to the golgi apparatus. Its subcellular location is the cell projection. It carries out the reaction a 4-hydroxy-3-(all-trans-polyprenyl)benzoate + 2 reduced [2Fe-2S]-[ferredoxin] + O2 + 2 H(+) = a 3,4-dihydroxy-5-(all-trans-polyprenyl)benzoate + 2 oxidized [2Fe-2S]-[ferredoxin] + H2O. The catalysed reaction is a 2-methoxy-6-(all-trans-polyprenyl)phenol + 2 reduced [2Fe-2S]-[ferredoxin] + O2 + 2 H(+) = a 2-methoxy-6-(all-trans-polyprenyl)benzene-1,4-diol + 2 oxidized [2Fe-2S]-[ferredoxin] + H2O. The protein operates within cofactor biosynthesis; ubiquinone biosynthesis. In terms of biological role, FAD-dependent monooxygenase required for two non-consecutive steps during ubiquinone biosynthesis. Required for the C5-ring hydroxylation during ubiquinone biosynthesis by catalyzing the hydroxylation of 4-hydroxy-3-(all-trans-polyprenyl)benzoic acid to 3,4-dihydroxy-5-(all-trans-polyprenyl)benzoic acid. Also acts downstream of coq4, for the C1-hydroxylation during ubiquinone biosynthesis by catalyzing the hydroxylation of 2-methoxy-6-(all-trans-polyprenyl)phenol to 2-methoxy-6-(all-trans-polyprenyl)benzene-1,4-diol. The electrons required for the hydroxylation reaction are funneled indirectly to coq6 from NADPH via a ferredoxin/ferredoxin reductase system. In Danio rerio (Zebrafish), this protein is Ubiquinone biosynthesis monooxygenase COQ6, mitochondrial.